The sequence spans 136 residues: Small ribosomal subunit protein uS11c (136 aa).

This sequence belongs to the universal ribosomal protein uS11 family. Part of the 30S ribosomal subunit.

The protein resides in the plastid. Its subcellular location is the chloroplast. The protein is Small ribosomal subunit protein uS11c of Guizotia abyssinica (Niger).